A 475-amino-acid polypeptide reads, in one-letter code: Bifunctional protein HldE (475 aa).

The segment at 1–318 is ribokinase; that stretch reads MMQYSLKFNQ…ENAIHHREET (318 aa). An ATP-binding site is contributed by 195-198; it reads NMAE. Aspartate 264 is a catalytic residue. Residues 344–475 are cytidylyltransferase; that stretch reads MTNGCFDILH…DVIKKIQAIR (132 aa).

This sequence in the N-terminal section; belongs to the carbohydrate kinase PfkB family. It in the C-terminal section; belongs to the cytidylyltransferase family. In terms of assembly, homodimer.

It carries out the reaction D-glycero-beta-D-manno-heptose 7-phosphate + ATP = D-glycero-beta-D-manno-heptose 1,7-bisphosphate + ADP + H(+). It catalyses the reaction D-glycero-beta-D-manno-heptose 1-phosphate + ATP + H(+) = ADP-D-glycero-beta-D-manno-heptose + diphosphate. The protein operates within nucleotide-sugar biosynthesis; ADP-L-glycero-beta-D-manno-heptose biosynthesis; ADP-L-glycero-beta-D-manno-heptose from D-glycero-beta-D-manno-heptose 7-phosphate: step 1/4. Its pathway is nucleotide-sugar biosynthesis; ADP-L-glycero-beta-D-manno-heptose biosynthesis; ADP-L-glycero-beta-D-manno-heptose from D-glycero-beta-D-manno-heptose 7-phosphate: step 3/4. It participates in bacterial outer membrane biogenesis; LOS core biosynthesis. Functionally, catalyzes the phosphorylation of D-glycero-D-manno-heptose 7-phosphate at the C-1 position to selectively form D-glycero-beta-D-manno-heptose-1,7-bisphosphate. In terms of biological role, catalyzes the ADP transfer from ATP to D-glycero-beta-D-manno-heptose 1-phosphate, yielding ADP-D-glycero-beta-D-manno-heptose. This Haemophilus ducreyi (strain 35000HP / ATCC 700724) protein is Bifunctional protein HldE.